Consider the following 262-residue polypeptide: Phosphatidylglycerol--prolipoprotein diacylglyceryl transferase (262 aa).

4 helical membrane passes run 9–29, 41–61, 80–100, and 109–129; these read LGPL…ILAV, IIPD…ILGA, IFAI…GALV, and LINT…AQSL. Position 131 (Arg-131) interacts with a 1,2-diacyl-sn-glycero-3-phospho-(1'-sn-glycerol). The next 3 helical transmembrane spans lie at 167–187, 197–217, and 226–246; these read QPTF…ILIF, GHIT…IEGM, and GLRV…MIVI.

This sequence belongs to the Lgt family.

The protein resides in the cell membrane. It catalyses the reaction L-cysteinyl-[prolipoprotein] + a 1,2-diacyl-sn-glycero-3-phospho-(1'-sn-glycerol) = an S-1,2-diacyl-sn-glyceryl-L-cysteinyl-[prolipoprotein] + sn-glycerol 1-phosphate + H(+). It functions in the pathway protein modification; lipoprotein biosynthesis (diacylglyceryl transfer). Catalyzes the transfer of the diacylglyceryl group from phosphatidylglycerol to the sulfhydryl group of the N-terminal cysteine of a prolipoprotein, the first step in the formation of mature lipoproteins. The protein is Phosphatidylglycerol--prolipoprotein diacylglyceryl transferase of Streptococcus pneumoniae (strain P1031).